Reading from the N-terminus, the 581-residue chain is MDADEVRERAGSLPREPGVYLFEQGRDDKRRVLYVGKAVDLRDRVRSYADPRSERIAKMVERAETIDFAVTDTETQALLLEANLIKRHRPPYNVRLKDDKSYPLVQLTDHPVPRIEVTRDPADGATVYGPFTDKGRVETVVKALREAYGLRGCSDHKYSNRDRPCLDYEMGICTAPCTGEIGEADYAEDAEAVTRYFEGETGVLADPLRREMEAAAQNQEFERAANLRDKLGAVEALHGEGDTAVSDSGGYQTTDVLGAAIEGERAIVARLHAEGGKLVERDRHTLEAPDGEGTAGVYRAFIPQYYAERELPDRILCAEAPADPDIEAWLESEGVTLGVPGAGREATLVDLALKNARQRGGTDDESGRLADALGIDHPSRIEGFDVSHAQGRSAVGSNVTFVDETPEKSDYRRKKLTEQNDDYANMRELLRWRATRAVEGRDDRPDPDLLLIDGGDGQLGAARDALAETGWDVPAIALAKDEELVITPDRVYDWNDDAPQLHLLQRIRDEAHRFAVQYHQTLRDEVSTTLDDVPGIGPETRKRLLRRFGSVDSVRAASDEELTAIDGIGEQTAETIRTRLQ.

One can recognise a GIY-YIG domain in the interval 15–94; sequence REPGVYLFEQ…IKRHRPPYNV (80 aa). One can recognise a UVR domain in the interval 202-237; the sequence is GVLADPLRREMEAAAQNQEFERAANLRDKLGAVEAL.

Belongs to the UvrC family. In terms of assembly, interacts with UvrB in an incision complex.

The protein resides in the cytoplasm. In terms of biological role, the UvrABC repair system catalyzes the recognition and processing of DNA lesions. UvrC both incises the 5' and 3' sides of the lesion. The N-terminal half is responsible for the 3' incision and the C-terminal half is responsible for the 5' incision. The protein is UvrABC system protein C of Haloarcula marismortui (strain ATCC 43049 / DSM 3752 / JCM 8966 / VKM B-1809) (Halobacterium marismortui).